The primary structure comprises 355 residues: (R,S)-reticuline 7-O-methyltransferase (355 aa).

S-adenosyl-L-methionine contacts are provided by residues 197 to 200 (VGGG), D221, 221 to 222 (DL), 241 to 242 (DM), and K255. H259 functions as the Proton acceptor in the catalytic mechanism.

Belongs to the class I-like SAM-binding methyltransferase superfamily. Cation-independent O-methyltransferase family. Homodimer. As to expression, expressed in capsules, buds and stems, and at lower levels in leaves. Localized to parenchyma cells within the vascular bundle, but only to those cells distal to laticifers. In roots, found in the pericycle within the stele.

It carries out the reaction (S)-reticuline + S-adenosyl-L-methionine = (S)-laudanine + S-adenosyl-L-homocysteine + H(+). It catalyses the reaction (R)-reticuline + S-adenosyl-L-methionine = (R)-laudanine + S-adenosyl-L-homocysteine + H(+). Catalyzes the transfer of a methyl group to reticuline to form laudanine. Methylates the simple catechols guaiacol and isovanillic acid as well as the tetrahydrobenzylisoquinolines (R)-reticuline, (S)-reticuline, (R,S)-orientaline, (R)-protosinomenine and (R,S)-isoorientaline. Involved in the production of laudanine. The protein is (R,S)-reticuline 7-O-methyltransferase of Papaver somniferum (Opium poppy).